The sequence spans 129 residues: uncharacterized protein (129 aa).

Residues 23–101 (KASTSSESCQ…TAATRTTSKK (79 aa)) form a disordered region. Composition is skewed to basic and acidic residues over residues 31-40 (CQRRGVRDDT) and 67-80 (EGDR…EKEP).

This is an uncharacterized protein from Ictaluridae (bullhead catfishes).